The primary structure comprises 1309 residues: MNSAPRNAGAARSVDRRGFIAACGLLVLLVVRMLGAADATRIFDIENIPVVKYVAVAGRNVTLNCPGVTEHSLVDTLVWRTSQTIAEYVDGGLPLVSSLRITLLPDNFSLHFNPAFASDTDEYSCLVNDRHSPDALVDLLVQDVPDPPGRPLVLSFTSRTVNLSWAYTQDPRNAPINNFVIETRVGENGEWDQVDPLYTNSNEAFYQVTGLVPFTVYSFRVIAVNELGHSPPSKESYYFVTLREAPTGKPVTTIAHNTSATSVYISWKPPPAETILGEFLGYRITYRARDKGTDDDVKEIYIRDSTVESHEIHHLETYTQYLASIQVFNPEGLGPPTTVLVMTDEGVPSKPLNLSVLEVTSTTIKITWREPEKLNGAIHGYRVYYVHQNQTLLHLPILKADAAVNSVYTYTLSNLKPYTDYKIIVAAFTKKFDGEPSEVSQRTDISGPSAPKVVNLTCHSQHELLFGWHIPQTYYNTIDYYIISYRNLEHSEYKDIRLTANSSIVETSMIIPNLTTNMVYEVKVRAASASVINPKQIILGSYSEPKKISLQLHCEKIPQPSQRQVYDDYNLAVLGGIVFSCFGLLLIVLSFLLWKKCFHAAYYYLDDPPACQGANTAGLIDWEAPCEVAGEVRGPIPVTEFAKHVASLHVDGDIGFSKEYEAIQGEALNDEYPSEHSQHPDNKGKNRYLNVIAYDHSRVHLRQVPGQKKHLDYINANYIDGYQRPRSFIGTQGPLPGTFDCFWRMIWEQRVAIIVMITNLVERGRRKCDMYWPKDGAEMYGVIQVRLIREDVMATYTVRTLQIKHTKLKKKKASQSEKLVYQYHYTNWPDHGTPDHPLPVINFVKKSTAANPSDAGPIVVHCSAGVGRTGTYIVLDAMLKQIESKGMLNVFGFLRYIRAQRNYLVQTEEQYIFIHDALVEAIDSGETNIKMDAIGGLVNNIDFIDNQYKLITSYQPKEINLTSALKSVNAIKNRSSLVPLEGSRVHLTPKPGVEGSDYINASWLHGFRRLRDFVVTQHPLIETFKDFWQMVWDHNAQTVVLLSSADNMSFLQFWPNESEPMESDYYRIRMVSETSENNYIVRNFVIQSIQDDYELSVRMFENPMWPDMANPRSIYDFAVRVHERCAQYRNGPIVVVDRYGGFQACQFCCISSLAMQLEYDQTANVYTYAKLYHNKRPGIWSSYEDIRQIYRILSYMPKDLGLLKCTELRTEFDDAAIMTATPDLYSKICSNGSINTHLNSGDGGGNGNDGVPTGNGTNGGLPMSGGGTTTAATIQNGGTVIVKMNGEDNDELSVVVATSNHLNLDHNQS.

The first 36 residues, 1–36 (MNSAPRNAGAARSVDRRGFIAACGLLVLLVVRMLGA), serve as a signal peptide directing secretion. Over 37-572 (ADATRIFDIE…RQVYDDYNLA (536 aa)) the chain is Extracellular. 9 N-linked (GlcNAc...) asparagine glycosylation sites follow: Asn60, Asn107, Asn162, Asn257, Asn353, Asn389, Asn455, Asn501, and Asn513. 4 Fibronectin type-III domains span residues 147 to 244 (PPGR…TLRE), 249 to 347 (KPVT…DEGV), 350 to 449 (KPLN…SGPS), and 450 to 553 (APKV…LQLH). The chain crosses the membrane as a helical span at residues 573–593 (VLGGIVFSCFGLLLIVLSFLL). The Cytoplasmic portion of the chain corresponds to 594 to 1309 (WKKCFHAAYY…NHLNLDHNQS (716 aa)). 2 Tyrosine-protein phosphatase domains span residues 656-921 (FSKE…LVEA) and 944-1196 (IDNQ…LSYM). The active-site Phosphocysteine intermediate is Cys862. Residues 1239 to 1269 (NSGDGGGNGNDGVPTGNGTNGGLPMSGGGTT) are disordered. The segment covering 1256–1268 (GTNGGLPMSGGGT) has biased composition (gly residues).

It belongs to the protein-tyrosine phosphatase family. Receptor class subfamily. Interacts with C-type lectin mosGCTL-1; the interaction probably mediates the recruitment of West Nile virus particles in complex with C-type lectin mosGCTL-1 to the cell surface. Interacts with C-type lectin mosGCTL-7; the interaction probably mediates the recruitment of Japanese encephalitis virus particles in complex with C-type lectin mosGCTL-7 to the cell surface. As to expression, salivary gland (at protein level). Hemolymph. Low-level expression in midgut.

It is found in the cell membrane. It carries out the reaction O-phospho-L-tyrosyl-[protein] + H2O = L-tyrosyl-[protein] + phosphate. Its function is as follows. Putative protein tyrosine-protein phosphatase. Functionally, (Microbial infection) Facilitates West Nile virus infection in mosquitoes probably via recruiting West Nile virus particles in complex with C-type lectin mosGCTL-1 to the cell surface. In terms of biological role, (Microbial infection) Facilitates Japanese encephalitis virus infection in mosquitoes probably via recruiting Japanese encephalitis virus particles in complex with C-type lectin mosGCTL-7 to the cell surface. This is Putative receptor-type tyrosine-protein phosphatase mosPTP-1 from Aedes aegypti (Yellowfever mosquito).